Reading from the N-terminus, the 569-residue chain is Alpha-amylase (569 aa).

Positions 1–28 (MARKTVAAALALVAGAAVAVTGNAPAQA) are cleaved as a signal peptide. Ca(2+) is bound by residues asparagine 120, glutamine 166, and aspartate 175. The Nucleophile role is filled by aspartate 205. Histidine 209 contacts Ca(2+). Residue glutamate 232 is the Proton donor of the active site. The CBM20 domain occupies 468 to 569 (TTPPATSGAS…QLVLNDTFRS (102 aa)).

This sequence belongs to the glycosyl hydrolase 13 family. In terms of assembly, monomer. The cofactor is Ca(2+).

It carries out the reaction Endohydrolysis of (1-&gt;4)-alpha-D-glucosidic linkages in polysaccharides containing three or more (1-&gt;4)-alpha-linked D-glucose units.. The chain is Alpha-amylase (aml) from Streptomyces violaceus (Streptomyces venezuelae).